The sequence spans 311 residues: Probable manganese-dependent inorganic pyrophosphatase (311 aa).

Mn(2+) contacts are provided by histidine 9, aspartate 13, aspartate 15, aspartate 77, histidine 99, and aspartate 151.

The protein belongs to the PPase class C family. Mn(2+) is required as a cofactor.

It is found in the cytoplasm. It carries out the reaction diphosphate + H2O = 2 phosphate + H(+). The chain is Probable manganese-dependent inorganic pyrophosphatase from Streptococcus agalactiae serotype III (strain NEM316).